The chain runs to 349 residues: Probable sugar phosphate/phosphate translocator At5g25400 (349 aa).

The next 10 membrane-spanning stretches (helical) occupy residues 15–35 (IIIS…VIVY), 49–69 (FPIS…FLLI), 89–109 (VVPI…AYIY), 113–133 (SFIQ…GVLF), 141–161 (ETMM…YGEA), 165–185 (VWGV…LVMI), 205–225 (VAPC…FPIL), 236–256 (LIFG…FLLV), 263–283 (TMNV…WSVI), and 286–306 (TVTP…AYYN). The region spanning 38–156 (YILDKKMYDW…LSISFGVAIA (119 aa)) is the EamA domain. The segment at 321-349 (TAQQVDEETGRLLEEREGNEGGRKNEPED) is disordered. Basic and acidic residues predominate over residues 328–349 (ETGRLLEEREGNEGGRKNEPED).

This sequence belongs to the TPT transporter family. TPT (TC 2.A.7.9) subfamily.

It localises to the membrane. The protein is Probable sugar phosphate/phosphate translocator At5g25400 of Arabidopsis thaliana (Mouse-ear cress).